Here is a 919-residue protein sequence, read N- to C-terminus: Kinesin-like protein KIN-UA (919 aa).

Positions Met-1 to Pro-68 are disordered. Low complexity predominate over residues Gly-15 to Ala-51. Residues Leu-52–Gly-66 are compositionally biased toward gly residues. A Kinesin motor domain is found at Arg-70–Val-412. Position 155 to 162 (Gly-155 to Thr-162) interacts with ATP. The tract at residues Thr-286–Lys-305 is disordered. Residues Ser-291–Thr-301 are compositionally biased toward polar residues. The short motif at Arg-382–Gly-390 is the D-BOX element. Coiled-coil stretches lie at residues Ser-428–Lys-492 and Ala-530–His-621. 4 ARM repeats span residues Lys-650–Ala-689, Glu-691–Met-731, Glu-733–Gly-773, and Asp-775–Lys-814.

Belongs to the TRAFAC class myosin-kinesin ATPase superfamily. Kinesin family. Ungrouped subfamily. Interacts (via C-terminus) with NEK5. As to expression, expressed in leaves, guard cells, trichomes, vascular tissues, stele of the root tip region and columella cells. Highest expression detected in guard cells.

It is found in the cytoplasm. Its subcellular location is the cytoskeleton. The chain is Kinesin-like protein KIN-UA from Arabidopsis thaliana (Mouse-ear cress).